The chain runs to 306 residues: Glutathione transport system permease protein GsiC (306 aa).

The Cytoplasmic segment spans residues 1–8 (MLNYVIKR). Residues 9–29 (LLGLIPTLFIVSVLVFLFVHM) traverse the membrane as a helical segment. The Periplasmic segment spans residues 30 to 102 (LPGDPARLIA…SRFMPTLWLT (73 aa)). Positions 95 to 292 (FMPTLWLTIT…LEFILINLVV (198 aa)) constitute an ABC transmembrane type-1 domain. The chain crosses the membrane as a helical span at residues 103-123 (ITSMVWAVIFGMAAGIIAAVW). The Cytoplasmic portion of the chain corresponds to 124–134 (RNRWPDRLSMT). The chain crosses the membrane as a helical span at residues 135 to 155 (IAVSGISFPAFALGMLLIQVF). Over 156–168 (SVELGWLPTVGAD) the chain is Periplasmic. The helical transmembrane segment at 169 to 189 (SWQHYILPSLTLGAAVAAVMA) threads the bilayer. Topologically, residues 190 to 228 (RFTRASFVDVLSEDYMRTARAKGVSETWVVLKHGLRNAM) are cytoplasmic. The chain crosses the membrane as a helical span at residues 229–249 (IPVVTMMGLQFGFLLGGSIVV). Topologically, residues 250-277 (EKVFNWPGLGRLLVDSVEMRDYPVIQAE) are periplasmic. A helical membrane pass occupies residues 278–298 (ILLFSLEFILINLVVDVLYAA). Residues 299-306 (INPAIRYK) are Cytoplasmic-facing.

This sequence belongs to the binding-protein-dependent transport system permease family. As to quaternary structure, the complex is composed of two ATP-binding proteins (GsiA), two transmembrane proteins (GsiC and GsiD) and a solute-binding protein (GsiB).

Its subcellular location is the cell inner membrane. In terms of biological role, part of the ABC transporter complex GsiABCD involved in glutathione import. Probably responsible for the translocation of the substrate across the membrane. This Escherichia coli O1:K1 / APEC protein is Glutathione transport system permease protein GsiC.